Here is a 449-residue protein sequence, read N- to C-terminus: Phosphoglucosamine mutase (449 aa).

Ser-100 (phosphoserine intermediate) is an active-site residue. Ser-100, Asp-241, Asp-243, and Asp-245 together coordinate Mg(2+). Ser-100 carries the phosphoserine modification.

It belongs to the phosphohexose mutase family. Requires Mg(2+) as cofactor. In terms of processing, activated by phosphorylation.

The enzyme catalyses alpha-D-glucosamine 1-phosphate = D-glucosamine 6-phosphate. In terms of biological role, catalyzes the conversion of glucosamine-6-phosphate to glucosamine-1-phosphate. The chain is Phosphoglucosamine mutase from Caldicellulosiruptor bescii (strain ATCC BAA-1888 / DSM 6725 / KCTC 15123 / Z-1320) (Anaerocellum thermophilum).